We begin with the raw amino-acid sequence, 274 residues long: Leucine-rich repeat-containing protein 10 (274 aa).

LRR repeat units lie at residues 30–51 (LDRM…VCSF), 52–74 (TELV…LAQL), 76–97 (NLQI…VCTL), 98–120 (KQLC…LSLL), 121–143 (QNLR…VCEL), 145–166 (LLKT…LRRL), 167–189 (RELR…LLRM), and 191–213 (FLEV…HLTN). The disordered stretch occupies residues 236–274 (RVGRWAEETPEPDPRKARRYALAKEENQEPPPPLLPSSS). The span at 239 to 250 (RWAEETPEPDPR) shows a compositional bias: basic and acidic residues. The span at 264 to 274 (EPPPPLLPSSS) shows a compositional bias: pro residues.

Detected specifically in the heart.

It is found in the nucleus. In terms of biological role, may play important roles in cardiac development and/or cardiac function. The polypeptide is Leucine-rich repeat-containing protein 10 (Lrrc10) (Mus musculus (Mouse)).